A 456-amino-acid polypeptide reads, in one-letter code: Glycine--tRNA ligase (456 aa).

Substrate is bound by residues Arg98 and Glu168. ATP-binding positions include 200 to 202 (RNE), 210 to 215 (FRTREF), 285 to 286 (EL), and 329 to 332 (GVER). 215-219 (FEQME) is a substrate binding site. Residue 325–329 (EPSVG) participates in substrate binding.

This sequence belongs to the class-II aminoacyl-tRNA synthetase family. As to quaternary structure, homodimer.

It localises to the cytoplasm. It carries out the reaction tRNA(Gly) + glycine + ATP = glycyl-tRNA(Gly) + AMP + diphosphate. In terms of biological role, catalyzes the attachment of glycine to tRNA(Gly). This is Glycine--tRNA ligase from Mycoplasma mycoides subsp. mycoides SC (strain CCUG 32753 / NCTC 10114 / PG1).